Here is a 123-residue protein sequence, read N- to C-terminus: Galanin peptides (123 aa).

An N-terminal signal peptide occupies residues 1-19 (MPRGCALLLASLLLASALS). Residues 20-30 (ATLGLGSPVKE) constitute a propeptide that is removed on maturation. Ala-61 carries the alanine amide modification. 2 positions are modified to phosphoserine: Ser-116 and Ser-117.

It belongs to the galanin family.

Its subcellular location is the secreted. Functionally, endocrine hormone of the central and peripheral nervous systems that binds and activates the G protein-coupled receptors GALR1, GALR2, and GALR3. This small neuropeptide may regulate diverse physiologic functions including contraction of smooth muscle of the gastrointestinal and genitourinary tract, growth hormone and insulin release and adrenal secretion. The protein is Galanin peptides (GAL) of Sus scrofa (Pig).